A 296-amino-acid chain; its full sequence is Formamidopyrimidine-DNA glycosylase (296 aa).

The active-site Schiff-base intermediate with DNA is Pro2. Glu3 serves as the catalytic Proton donor. Lys61 (proton donor; for beta-elimination activity) is an active-site residue. DNA-binding residues include His95, Arg122, and Lys169. The FPG-type zinc-finger motif lies at 255-289 (NAYGRNDQPCARCGTPIQRETFMNRSSYSCPRCQP). Residue Arg279 is the Proton donor; for delta-elimination activity of the active site.

It belongs to the FPG family. As to quaternary structure, monomer. It depends on Zn(2+) as a cofactor.

The catalysed reaction is Hydrolysis of DNA containing ring-opened 7-methylguanine residues, releasing 2,6-diamino-4-hydroxy-5-(N-methyl)formamidopyrimidine.. The enzyme catalyses 2'-deoxyribonucleotide-(2'-deoxyribose 5'-phosphate)-2'-deoxyribonucleotide-DNA = a 3'-end 2'-deoxyribonucleotide-(2,3-dehydro-2,3-deoxyribose 5'-phosphate)-DNA + a 5'-end 5'-phospho-2'-deoxyribonucleoside-DNA + H(+). Its function is as follows. Involved in base excision repair of DNA damaged by oxidation or by mutagenic agents. Acts as a DNA glycosylase that recognizes and removes damaged bases. Has a preference for oxidized purines, such as 7,8-dihydro-8-oxoguanine (8-oxoG). Has AP (apurinic/apyrimidinic) lyase activity and introduces nicks in the DNA strand. Cleaves the DNA backbone by beta-delta elimination to generate a single-strand break at the site of the removed base with both 3'- and 5'-phosphates. This Thermobifida fusca (strain YX) protein is Formamidopyrimidine-DNA glycosylase.